A 474-amino-acid polypeptide reads, in one-letter code: Eukaryotic translation initiation factor 3 subunit L (474 aa).

Residues 255-449 enclose the PCI domain; the sequence is DAIRMFSHIL…DLDYALQGDL (195 aa).

It belongs to the eIF-3 subunit L family. As to quaternary structure, component of the eukaryotic translation initiation factor 3 (eIF-3) complex.

Its subcellular location is the cytoplasm. Functionally, component of the eukaryotic translation initiation factor 3 (eIF-3) complex, which is involved in protein synthesis of a specialized repertoire of mRNAs and, together with other initiation factors, stimulates binding of mRNA and methionyl-tRNAi to the 40S ribosome. The eIF-3 complex specifically targets and initiates translation of a subset of mRNAs involved in cell proliferation. The protein is Eukaryotic translation initiation factor 3 subunit L of Chaetomium globosum (strain ATCC 6205 / CBS 148.51 / DSM 1962 / NBRC 6347 / NRRL 1970) (Soil fungus).